Reading from the N-terminus, the 307-residue chain is tRNA pseudouridine synthase B (307 aa).

The active-site Nucleophile is D38.

Belongs to the pseudouridine synthase TruB family. Type 1 subfamily.

It catalyses the reaction uridine(55) in tRNA = pseudouridine(55) in tRNA. Functionally, responsible for synthesis of pseudouridine from uracil-55 in the psi GC loop of transfer RNAs. The sequence is that of tRNA pseudouridine synthase B from Lachnoclostridium phytofermentans (strain ATCC 700394 / DSM 18823 / ISDg) (Clostridium phytofermentans).